A 215-amino-acid polypeptide reads, in one-letter code: Urease accessory protein UreF (215 aa).

The protein belongs to the UreF family. As to quaternary structure, ureD, UreF and UreG form a complex that acts as a GTP-hydrolysis-dependent molecular chaperone, activating the urease apoprotein by helping to assemble the nickel containing metallocenter of UreC. The UreE protein probably delivers the nickel.

The protein resides in the cytoplasm. Its function is as follows. Required for maturation of urease via the functional incorporation of the urease nickel metallocenter. The chain is Urease accessory protein UreF from Paracoccus denitrificans (strain Pd 1222).